The following is a 156-amino-acid chain: ATP synthase subunit b (156 aa).

Residues 7–29 (LIAQAISFAILIWFTTKFVWPYL) form a helical membrane-spanning segment.

It belongs to the ATPase B chain family. As to quaternary structure, F-type ATPases have 2 components, F(1) - the catalytic core - and F(0) - the membrane proton channel. F(1) has five subunits: alpha(3), beta(3), gamma(1), delta(1), epsilon(1). F(0) has three main subunits: a(1), b(2) and c(10-14). The alpha and beta chains form an alternating ring which encloses part of the gamma chain. F(1) is attached to F(0) by a central stalk formed by the gamma and epsilon chains, while a peripheral stalk is formed by the delta and b chains.

It localises to the cell inner membrane. F(1)F(0) ATP synthase produces ATP from ADP in the presence of a proton or sodium gradient. F-type ATPases consist of two structural domains, F(1) containing the extramembraneous catalytic core and F(0) containing the membrane proton channel, linked together by a central stalk and a peripheral stalk. During catalysis, ATP synthesis in the catalytic domain of F(1) is coupled via a rotary mechanism of the central stalk subunits to proton translocation. Functionally, component of the F(0) channel, it forms part of the peripheral stalk, linking F(1) to F(0). This Methylobacillus flagellatus (strain ATCC 51484 / DSM 6875 / VKM B-1610 / KT) protein is ATP synthase subunit b.